Reading from the N-terminus, the 94-residue chain is Integration host factor subunit beta (94 aa).

This sequence belongs to the bacterial histone-like protein family. In terms of assembly, heterodimer of an alpha and a beta chain.

This protein is one of the two subunits of integration host factor, a specific DNA-binding protein that functions in genetic recombination as well as in transcriptional and translational control. In Histophilus somni (strain 129Pt) (Haemophilus somnus), this protein is Integration host factor subunit beta.